We begin with the raw amino-acid sequence, 156 residues long: ATP synthase subunit b (156 aa).

A helical transmembrane segment spans residues 11-31; that stretch reads AIAFVLFVLFCMKYIWPPIMA.

This sequence belongs to the ATPase B chain family. F-type ATPases have 2 components, F(1) - the catalytic core - and F(0) - the membrane proton channel. F(1) has five subunits: alpha(3), beta(3), gamma(1), delta(1), epsilon(1). F(0) has three main subunits: a(1), b(2) and c(10-14). The alpha and beta chains form an alternating ring which encloses part of the gamma chain. F(1) is attached to F(0) by a central stalk formed by the gamma and epsilon chains, while a peripheral stalk is formed by the delta and b chains.

Its subcellular location is the cell inner membrane. F(1)F(0) ATP synthase produces ATP from ADP in the presence of a proton or sodium gradient. F-type ATPases consist of two structural domains, F(1) containing the extramembraneous catalytic core and F(0) containing the membrane proton channel, linked together by a central stalk and a peripheral stalk. During catalysis, ATP synthesis in the catalytic domain of F(1) is coupled via a rotary mechanism of the central stalk subunits to proton translocation. Functionally, component of the F(0) channel, it forms part of the peripheral stalk, linking F(1) to F(0). The chain is ATP synthase subunit b from Yersinia enterocolitica serotype O:8 / biotype 1B (strain NCTC 13174 / 8081).